We begin with the raw amino-acid sequence, 28 residues long: Caerulein precursor fragment B1 (28 aa).

This sequence belongs to the gastrin/cholecystokinin family. As to expression, expressed by the skin glands.

Its subcellular location is the secreted. In terms of biological role, peptide CPF-B1: Has antimicrobial activity against Gram-negative bacteria E.coli ATCC 25922 (MIC=5 uM) and multidrug-resistant A.baumannii (MIC=4-8 uM), against Gram-positive bacteria S.aureus ATCC 25923 (MIC=5 uM) and methicillin-resistant S.aureus and against fungus C.albicans ATCC 90028 (MIC=25 uM). Has some hemolytic activity against human erythrocytes at high concentrations. The polypeptide is Caerulein precursor fragment B1 (Xenopus borealis (Kenyan clawed frog)).